We begin with the raw amino-acid sequence, 272 residues long: tRNA pseudouridine synthase B (272 aa).

Aspartate 38 functions as the Nucleophile in the catalytic mechanism.

The protein belongs to the pseudouridine synthase TruB family. Type 1 subfamily.

It catalyses the reaction uridine(55) in tRNA = pseudouridine(55) in tRNA. In terms of biological role, responsible for synthesis of pseudouridine from uracil-55 in the psi GC loop of transfer RNAs. This chain is tRNA pseudouridine synthase B, found in Campylobacter jejuni subsp. jejuni serotype O:23/36 (strain 81-176).